Reading from the N-terminus, the 717-residue chain is uncharacterized protein (717 aa).

This sequence belongs to the asfivirus C717R family.

The protein resides in the virion. This is an uncharacterized protein from Ornithodoros (relapsing fever ticks).